The chain runs to 436 residues: Acetyl-CoA decarbonylase/synthase complex subunit delta 1 (436 aa).

This sequence belongs to the CdhD family. As to quaternary structure, heterodimer of delta and gamma chains. The ACDS complex is made up of alpha, epsilon, beta, gamma and delta chains with a probable stoichiometry of (alpha(2)epsilon(2))(4)-beta(8)-(gamma(1)delta(1))(8) (Potential).

It functions in the pathway one-carbon metabolism; methanogenesis from acetate. Functionally, part of a complex that catalyzes the reversible cleavage of acetyl-CoA, allowing growth on acetate as sole source of carbon and energy. Probably maintains the overall quaternary structure of the ACDS complex. In Methanosarcina thermophila, this protein is Acetyl-CoA decarbonylase/synthase complex subunit delta 1 (cdhD1).